Consider the following 359-residue polypeptide: MAEHGAHITTASVADDQPSIFEVVAQDSLMTAVRPALQHVVKVLAESNPAHYGFFWRWFDEIFTLLDFLLQQHYLSRTSASFSEHFYGLKRIVAGSSPQLQRPASAGLPKEHLWKSAMFLVLLPYLKVKLEKLASTLREEDEYSIHPPSSHWKRFYRVFLAAYPFVTMTWEGWFLTQQLRYILGKAEHHSPLLKLAGVRLGRLTAQDIQAMEHRLVEASAMQEPVRSIGKKIKSALKKAVGGVALSLSTGLSVGVFFLQFLDWWYSSENQETIKSLTALPTPPPPVHLDYNSDSPLLPKMKTVCPLCRKARVNDTVLATSGYVFCYRCVFNYVRSHQACPITGYPTEVQHLIKLYSPEN.

Topologically, residues 1 to 19 (MAEHGAHITTASVADDQPS) are peroxisomal matrix. The helical transmembrane segment at 20 to 47 (IFEVVAQDSLMTAVRPALQHVVKVLAES) threads the bilayer. Residues 48–51 (NPAH) lie on the Cytoplasmic side of the membrane. A helical transmembrane segment spans residues 52–76 (YGFFWRWFDEIFTLLDFLLQQHYLS). The Peroxisomal matrix portion of the chain corresponds to 77-109 (RTSASFSEHFYGLKRIVAGSSPQLQRPASAGLP). A helical transmembrane segment spans residues 110 to 139 (KEHLWKSAMFLVLLPYLKVKLEKLASTLRE). At 140–144 (EDEYS) the chain is on the cytoplasmic side. A helical membrane pass occupies residues 145–183 (IHPPSSHWKRFYRVFLAAYPFVTMTWEGWFLTQQLRYIL). The Peroxisomal matrix portion of the chain corresponds to 184-249 (GKAEHHSPLL…VGGVALSLST (66 aa)). Residues 250–277 (GLSVGVFFLQFLDWWYSSENQETIKSLT) form a helical membrane-spanning segment. The Cytoplasmic segment spans residues 278-359 (ALPTPPPPVH…HLIKLYSPEN (82 aa)). Residues cysteine 304, cysteine 307, cysteine 325, and cysteine 328 each contribute to the Zn(2+) site. The RING-type; degenerate zinc-finger motif lies at 304-343 (CPLCRKARVNDTVLATSGYVFCYRCVFNYVRSHQACPITG).

The protein belongs to the pex2/pex10/pex12 family. As to quaternary structure, component of the PEX2-PEX10-PEX12 retrotranslocation channel, composed of PEX2, PEX10 and PEX12. Interacts with PEX19 via its cytoplasmic domain.

Its subcellular location is the peroxisome membrane. Its pathway is protein modification; protein ubiquitination. Component of a retrotranslocation channel required for peroxisome organization by mediating export of the PEX5 receptor from peroxisomes to the cytosol, thereby promoting PEX5 recycling. The retrotranslocation channel is composed of PEX2, PEX10 and PEX12; each subunit contributing transmembrane segments that coassemble into an open channel that specifically allows the passage of PEX5 through the peroxisomal membrane. PEX12 also regulates PEX5 recycling by activating the E3 ubiquitin-protein ligase activity of PEX10. When PEX5 recycling is compromised, PEX12 stimulates PEX10-mediated polyubiquitination of PEX5, leading to its subsequent degradation. The polypeptide is Peroxisome assembly protein 12 (Pex12) (Rattus norvegicus (Rat)).